Here is a 533-residue protein sequence, read N- to C-terminus: Probable fucosyltransferase 5 (533 aa).

The Cytoplasmic segment spans residues 1-13; the sequence is MYQKFQISGKIVK. The helical; Signal-anchor for type II membrane protein transmembrane segment at 14–34 threads the bilayer; it reads TLGLKMKVLIAVSFGSLLFIL. Topologically, residues 35-533 are lumenal; sequence SYSNNFNNKL…YGGLKLYDEF (499 aa). N-linked (GlcNAc...) asparagine glycosylation is found at asparagine 202, asparagine 227, asparagine 374, asparagine 396, and asparagine 475.

It belongs to the glycosyltransferase 37 family. Expressed in roots, leaves, flowers and siliques.

The protein localises to the golgi apparatus. The protein resides in the golgi stack membrane. The protein operates within protein modification; protein glycosylation. Its function is as follows. May be involved in cell wall biosynthesis. May act as a fucosyltransferase. The polypeptide is Probable fucosyltransferase 5 (FUT5) (Arabidopsis thaliana (Mouse-ear cress)).